The primary structure comprises 376 residues: UDP-N-acetylglucosamine 2-epimerase (376 aa).

Substrate contacts are provided by residues R10, K15, D95, E117, H213, Q271, F276, 290 to 292, E296, and R313; that span reads SGG.

It belongs to the UDP-N-acetylglucosamine 2-epimerase family. In terms of assembly, homodimer.

It localises to the cytoplasm. The enzyme catalyses UDP-N-acetyl-alpha-D-glucosamine = UDP-N-acetyl-alpha-D-mannosamine. It functions in the pathway bacterial outer membrane biogenesis; enterobacterial common antigen biosynthesis. Its function is as follows. Catalyzes the reversible epimerization at C-2 of UDP-N-acetylglucosamine (UDP-GlcNAc) and thereby provides bacteria with UDP-N-acetylmannosamine (UDP-ManNAc), the activated donor of ManNAc residues. The polypeptide is UDP-N-acetylglucosamine 2-epimerase (Escherichia coli O157:H7).